The sequence spans 207 residues: ATP synthase subunit b 2 (207 aa).

The helical transmembrane segment at 53–72 (TYASQLLWLVITFSVFYLLM) threads the bilayer.

Belongs to the ATPase B chain family. In terms of assembly, F-type ATPases have 2 components, F(1) - the catalytic core - and F(0) - the membrane proton channel. F(1) has five subunits: alpha(3), beta(3), gamma(1), delta(1), epsilon(1). F(0) has three main subunits: a(1), b(2) and c(10-14). The alpha and beta chains form an alternating ring which encloses part of the gamma chain. F(1) is attached to F(0) by a central stalk formed by the gamma and epsilon chains, while a peripheral stalk is formed by the delta and b chains.

Its subcellular location is the cell inner membrane. Its function is as follows. F(1)F(0) ATP synthase produces ATP from ADP in the presence of a proton or sodium gradient. F-type ATPases consist of two structural domains, F(1) containing the extramembraneous catalytic core and F(0) containing the membrane proton channel, linked together by a central stalk and a peripheral stalk. During catalysis, ATP synthesis in the catalytic domain of F(1) is coupled via a rotary mechanism of the central stalk subunits to proton translocation. In terms of biological role, component of the F(0) channel, it forms part of the peripheral stalk, linking F(1) to F(0). The b'-subunit is a diverged and duplicated form of b found in plants and photosynthetic bacteria. This Rhizobium leguminosarum bv. trifolii (strain WSM2304) protein is ATP synthase subunit b 2 (atpF2).